A 464-amino-acid polypeptide reads, in one-letter code: Siroheme synthase (464 aa).

Positions 1–203 are precorrin-2 dehydrogenase /sirohydrochlorin ferrochelatase; that stretch reads MEFLPLFHNL…GQGAEAERML (203 aa). NAD(+) contacts are provided by residues 22-23 and 43-44; these read EI and PE. Phosphoserine is present on serine 128. The tract at residues 216-464 is uroporphyrinogen-III C-methyltransferase; that stretch reads GEVYLVGAGP…AWFEGAQATL (249 aa). Residue proline 225 coordinates S-adenosyl-L-methionine. Aspartate 248 functions as the Proton acceptor in the catalytic mechanism. Catalysis depends on lysine 270, which acts as the Proton donor. S-adenosyl-L-methionine-binding positions include 301–303, isoleucine 306, 331–332, methionine 383, and glycine 412; these read GGD and TA.

The protein in the N-terminal section; belongs to the precorrin-2 dehydrogenase / sirohydrochlorin ferrochelatase family. This sequence in the C-terminal section; belongs to the precorrin methyltransferase family.

It catalyses the reaction uroporphyrinogen III + 2 S-adenosyl-L-methionine = precorrin-2 + 2 S-adenosyl-L-homocysteine + H(+). The enzyme catalyses precorrin-2 + NAD(+) = sirohydrochlorin + NADH + 2 H(+). The catalysed reaction is siroheme + 2 H(+) = sirohydrochlorin + Fe(2+). The protein operates within cofactor biosynthesis; adenosylcobalamin biosynthesis; precorrin-2 from uroporphyrinogen III: step 1/1. It functions in the pathway cofactor biosynthesis; adenosylcobalamin biosynthesis; sirohydrochlorin from precorrin-2: step 1/1. It participates in porphyrin-containing compound metabolism; siroheme biosynthesis; precorrin-2 from uroporphyrinogen III: step 1/1. Its pathway is porphyrin-containing compound metabolism; siroheme biosynthesis; siroheme from sirohydrochlorin: step 1/1. The protein operates within porphyrin-containing compound metabolism; siroheme biosynthesis; sirohydrochlorin from precorrin-2: step 1/1. Multifunctional enzyme that catalyzes the SAM-dependent methylations of uroporphyrinogen III at position C-2 and C-7 to form precorrin-2 via precorrin-1. Then it catalyzes the NAD-dependent ring dehydrogenation of precorrin-2 to yield sirohydrochlorin. Finally, it catalyzes the ferrochelation of sirohydrochlorin to yield siroheme. In Pseudomonas syringae pv. syringae (strain B728a), this protein is Siroheme synthase.